A 28-amino-acid chain; its full sequence is leu operon leader peptide (28 aa).

In terms of biological role, involved in control of the biosynthesis of leucine. This Salmonella typhimurium (strain LT2 / SGSC1412 / ATCC 700720) protein is leu operon leader peptide (leuL).